Here is a 246-residue protein sequence, read N- to C-terminus: 4-aminobenzoate synthase (246 aa).

Residues Glu88, His95, Glu149, His181, Asp185, and His188 each contribute to the Fe(2+) site.

Belongs to the CADD family. Homodimer. Requires Fe(2+) as cofactor. It depends on Mn(2+) as a cofactor.

In terms of biological role, involved in de novo para-aminobenzoate (PABA) biosynthesis. Acts as a self-sacrificing or 'suicide' enzyme that utilizes its own active site tyrosine residue(s) as the substrate for PABA synthesis. The side chain of the tyrosine residue is released from the protein backbone via cleavage of the C(alpha)-C(beta) bond, leaving a glycine in place of the original tyrosine residue. Reaction requires O(2) and a reduced dimetal cofactor. This chain is 4-aminobenzoate synthase, found in Nitrosomonas europaea (strain ATCC 19718 / CIP 103999 / KCTC 2705 / NBRC 14298).